The sequence spans 436 residues: GTPase Der (436 aa).

EngA-type G domains are found at residues 4 to 167 (PVVA…PKVE) and 176 to 351 (IRFC…ESHN). GTP contacts are provided by residues 10-17 (GRPNVGKS), 57-61 (DTGGI), 119-122 (NKVD), 182-189 (GRPNVGKS), 229-233 (DTAGM), and 294-297 (NKWD). The region spanning 352 to 436 (IRVQTNVLND…PIRIIARARD (85 aa)) is the KH-like domain.

It belongs to the TRAFAC class TrmE-Era-EngA-EngB-Septin-like GTPase superfamily. EngA (Der) GTPase family. Associates with the 50S ribosomal subunit.

GTPase that plays an essential role in the late steps of ribosome biogenesis. This chain is GTPase Der, found in Bacillus cytotoxicus (strain DSM 22905 / CIP 110041 / 391-98 / NVH 391-98).